An 84-amino-acid chain; its full sequence is Large ribosomal subunit protein bL31 (84 aa).

Zn(2+) contacts are provided by C16, C18, C38, and C41.

Belongs to the bacterial ribosomal protein bL31 family. Type A subfamily. Part of the 50S ribosomal subunit. It depends on Zn(2+) as a cofactor.

Its function is as follows. Binds the 23S rRNA. This chain is Large ribosomal subunit protein bL31, found in Mycobacterium leprae (strain Br4923).